Reading from the N-terminus, the 540-residue chain is Coatomer subunit delta (540 aa).

Positions 169–263 (RHEEMLRGKR…GMILGGKSGT (95 aa)) are disordered. Gly residues predominate over residues 179–197 (SGGYTGISGGGGMGSGGMG). Over residues 212–229 (NNNNNNNNNNNNNNNNNN) the composition is skewed to low complexity. Positions 238 to 250 (SPNTSRPSAASSG) are enriched in polar residues. Gly residues predominate over residues 251 to 261 (SQGGMILGGKS). The region spanning 304–540 (QEGVHITVEE…TLSVDTYEIK (237 aa)) is the MHD domain.

Belongs to the adaptor complexes medium subunit family. Delta-COP subfamily. As to quaternary structure, oligomeric complex that consists of at least the alpha, beta, beta', gamma, delta, epsilon and zeta subunits.

It is found in the cytoplasm. The protein resides in the golgi apparatus membrane. The protein localises to the cytoplasmic vesicle. It localises to the COPI-coated vesicle membrane. Its function is as follows. The coatomer is a cytosolic protein complex that binds to dilysine motifs and reversibly associates with Golgi non-clathrin-coated vesicles, which further mediate biosynthetic protein transport from the ER, via the Golgi up to the trans Golgi network. Coatomer complex is required for budding from Golgi membranes, and is essential for the retrograde Golgi-to-ER transport of dilysine-tagged proteins. This chain is Coatomer subunit delta (copd), found in Dictyostelium discoideum (Social amoeba).